We begin with the raw amino-acid sequence, 325 residues long: uncharacterized protein (325 aa).

Positions Met-1 to Gln-75 are disordered. Pro residues-rich tracts occupy residues Tyr-24–Gly-39 and Tyr-50–Tyr-70. A run of 4 helical transmembrane segments spans residues Ala-96–Ala-116, Ile-153–Ile-173, Leu-205–Phe-225, and Leu-273–Ile-293.

The protein resides in the cell membrane. This is an uncharacterized protein from Mycobacterium tuberculosis (strain CDC 1551 / Oshkosh).